The following is a 181-amino-acid chain: Interleukin-10 (181 aa).

Residues 1–19 form the signal peptide; it reads MHGSALLCCCLVLLAGVGA. 2 disulfide bridges follow: C31/C129 and C81/C135. N137 is a glycosylation site (N-linked (GlcNAc...) asparagine).

This sequence belongs to the IL-10 family. In terms of assembly, homodimer. Interacts with IL10RA and IL10RB.

It is found in the secreted. Its function is as follows. Major immune regulatory cytokine that acts on many cells of the immune system where it has profound anti-inflammatory functions, limiting excessive tissue disruption caused by inflammation. Mechanistically, IL10 binds to its heterotetrameric receptor comprising IL10RA and IL10RB leading to JAK1 and STAT2-mediated phosphorylation of STAT3. In turn, STAT3 translocates to the nucleus where it drives expression of anti-inflammatory mediators. Targets antigen-presenting cells (APCs) such as macrophages and monocytes and inhibits their release of pro-inflammatory cytokines including granulocyte-macrophage colony-stimulating factor /GM-CSF, granulocyte colony-stimulating factor/G-CSF, IL-1 alpha, IL-1 beta, IL-6, IL-8 and TNF-alpha. Also interferes with antigen presentation by reducing the expression of MHC-class II and co-stimulatory molecules, thereby inhibiting their ability to induce T cell activation. In addition, controls the inflammatory response of macrophages by reprogramming essential metabolic pathways including mTOR signaling. The polypeptide is Interleukin-10 (IL10) (Canis lupus familiaris (Dog)).